We begin with the raw amino-acid sequence, 475 residues long: MDLVTRRIRGALGIAGPLLFLEGVPRARLGEVVRIRGEPEASGRAAEERSGQVIALSRDRIAVQVLEETRGLAPARSEVTLTGQVARLGVARGMLGRVLDGLGRPADGLPPPVPEARPAIHGAALNVTRREKPSDFIETGVSAIDGMNTLVRGQKLPVFSCAGLPASRLAAQIVCQARVRGGEPFAVVFAAMGSPFREYHAFLEAFRAAGVLDRTVVFLNRAEDPPIERLMTPRCALTCAEHLAFTHGLHVLVVLTDVTSYCEALREVALAREEVPGRRGYPGYMYTDLATIFERAGRVRGRPGSLTQLPVLTMPDDDLTHPIPDLTGYITEGQIVLSRDLDRRGVYPPIDVLPSLSRLMGLGAGPGKTRDDHRPVADQLYAFYARGRDVRRMAAIVGAANLGEEEKRLLAFADAFEDGLVGQGGTFRTIEDTLEAGWRLLSGFPPAALTRIPERLLRARPAQPAAAATSGGAIA.

Belongs to the ATPase alpha/beta chains family.

Produces ATP from ADP in the presence of a proton gradient across the membrane. The V-type beta chain is a regulatory subunit. The polypeptide is V-type ATP synthase beta chain (Anaeromyxobacter dehalogenans (strain 2CP-C)).